The primary structure comprises 136 residues: Putative zinc finger protein 818 (136 aa).

A C2H2-type 1; degenerate zinc finger spans residues 64 to 83 (NVCGKVLSQNSHLVNHQRIH). The segment at 89–111 (YRCHECGKAFTQGSRFINHQIVH) adopts a C2H2-type 2 zinc-finger fold.

Belongs to the krueppel C2H2-type zinc-finger protein family.

The protein localises to the nucleus. In terms of biological role, may be involved in transcriptional regulation. This chain is Putative zinc finger protein 818 (ZNF818P), found in Homo sapiens (Human).